The sequence spans 444 residues: Adenylosuccinate synthetase (444 aa).

Residues 12 to 18 (GDEGKGK) and 40 to 42 (GHT) each bind GTP. Asp13 serves as the catalytic Proton acceptor. Positions 13 and 40 each coordinate Mg(2+). Residues 13-16 (DEGK), 38-41 (NAGH), Thr128, Arg142, Gln223, Thr238, and Arg302 contribute to the IMP site. His41 acts as the Proton donor in catalysis. A substrate-binding site is contributed by 298–304 (TTTGRRR). GTP is bound by residues Arg304, 330-332 (KLD), and 412-414 (SLG).

Belongs to the adenylosuccinate synthetase family. As to quaternary structure, homodimer. Mg(2+) serves as cofactor.

It localises to the cytoplasm. It catalyses the reaction IMP + L-aspartate + GTP = N(6)-(1,2-dicarboxyethyl)-AMP + GDP + phosphate + 2 H(+). The protein operates within purine metabolism; AMP biosynthesis via de novo pathway; AMP from IMP: step 1/2. Plays an important role in the de novo pathway of purine nucleotide biosynthesis. Catalyzes the first committed step in the biosynthesis of AMP from IMP. In Synechococcus sp. (strain ATCC 27144 / PCC 6301 / SAUG 1402/1) (Anacystis nidulans), this protein is Adenylosuccinate synthetase.